Consider the following 673-residue polypeptide: UvrABC system protein B (673 aa).

Residues 26–183 (EGLEDGLAHQ…RRLAELQYTR (158 aa)) form the Helicase ATP-binding domain. Residue 39–46 (GVTGSGKT) participates in ATP binding. Residues 92-115 (YYDYYQPEAYVPSSDTFIEKDASV) carry the Beta-hairpin motif. The 167-residue stretch at 431–597 (QVDDLLSEIR…GLNKKVVDIL (167 aa)) folds into the Helicase C-terminal domain. Positions 633–668 (QQKIHELEGQMMQHAQNLEFEEAAEIRDQLHQLREL) constitute a UVR domain.

Belongs to the UvrB family. Forms a heterotetramer with UvrA during the search for lesions. Interacts with UvrC in an incision complex.

It is found in the cytoplasm. The UvrABC repair system catalyzes the recognition and processing of DNA lesions. A damage recognition complex composed of 2 UvrA and 2 UvrB subunits scans DNA for abnormalities. Upon binding of the UvrA(2)B(2) complex to a putative damaged site, the DNA wraps around one UvrB monomer. DNA wrap is dependent on ATP binding by UvrB and probably causes local melting of the DNA helix, facilitating insertion of UvrB beta-hairpin between the DNA strands. Then UvrB probes one DNA strand for the presence of a lesion. If a lesion is found the UvrA subunits dissociate and the UvrB-DNA preincision complex is formed. This complex is subsequently bound by UvrC and the second UvrB is released. If no lesion is found, the DNA wraps around the other UvrB subunit that will check the other stand for damage. The polypeptide is UvrABC system protein B (Citrobacter koseri (strain ATCC BAA-895 / CDC 4225-83 / SGSC4696)).